Reading from the N-terminus, the 430-residue chain is Enolase (430 aa).

Gln167 is a binding site for (2R)-2-phosphoglycerate. The active-site Proton donor is Glu209. Asp246, Glu287, and Asp314 together coordinate Mg(2+). (2R)-2-phosphoglycerate-binding residues include Lys339, Arg368, Ser369, and Lys390. The active-site Proton acceptor is the Lys339.

This sequence belongs to the enolase family. It depends on Mg(2+) as a cofactor.

The protein resides in the cytoplasm. It localises to the secreted. Its subcellular location is the cell surface. It catalyses the reaction (2R)-2-phosphoglycerate = phosphoenolpyruvate + H2O. It functions in the pathway carbohydrate degradation; glycolysis; pyruvate from D-glyceraldehyde 3-phosphate: step 4/5. In terms of biological role, catalyzes the reversible conversion of 2-phosphoglycerate (2-PG) into phosphoenolpyruvate (PEP). It is essential for the degradation of carbohydrates via glycolysis. This is Enolase from Prochlorococcus marinus subsp. pastoris (strain CCMP1986 / NIES-2087 / MED4).